The sequence spans 486 residues: Ribosomal RNA small subunit methyltransferase F (486 aa).

Residues Ala124–Lys130, Glu148, Asp175, and Asp193 contribute to the S-adenosyl-L-methionine site. Residue Cys246 is the Nucleophile of the active site.

Belongs to the class I-like SAM-binding methyltransferase superfamily. RsmB/NOP family.

It localises to the cytoplasm. The enzyme catalyses cytidine(1407) in 16S rRNA + S-adenosyl-L-methionine = 5-methylcytidine(1407) in 16S rRNA + S-adenosyl-L-homocysteine + H(+). In terms of biological role, specifically methylates the cytosine at position 1407 (m5C1407) of 16S rRNA. The protein is Ribosomal RNA small subunit methyltransferase F of Shewanella putrefaciens (strain CN-32 / ATCC BAA-453).